The primary structure comprises 305 residues: Oxygen-dependent coproporphyrinogen-III oxidase (305 aa).

A substrate-binding site is contributed by S93. A divalent metal cation-binding residues include H97 and H107. H107 acts as the Proton donor in catalysis. 109-111 is a substrate binding site; that stretch reads NVR. Residues H146 and H176 each coordinate a divalent metal cation. Residues 241–276 are important for dimerization; it reads YVEFNLVFDRGTLFGLQSGGRTESILMSLPPQVRWG. Substrate is bound at residue 259-261; the sequence is GGR.

This sequence belongs to the aerobic coproporphyrinogen-III oxidase family. As to quaternary structure, homodimer. A divalent metal cation is required as a cofactor.

The protein localises to the cytoplasm. The enzyme catalyses coproporphyrinogen III + O2 + 2 H(+) = protoporphyrinogen IX + 2 CO2 + 2 H2O. Its pathway is porphyrin-containing compound metabolism; protoporphyrin-IX biosynthesis; protoporphyrinogen-IX from coproporphyrinogen-III (O2 route): step 1/1. Functionally, involved in the heme biosynthesis. Catalyzes the aerobic oxidative decarboxylation of propionate groups of rings A and B of coproporphyrinogen-III to yield the vinyl groups in protoporphyrinogen-IX. This chain is Oxygen-dependent coproporphyrinogen-III oxidase, found in Pseudomonas aeruginosa (strain UCBPP-PA14).